The chain runs to 85 residues: Defensin-like protein 11 (85 aa).

The signal sequence occupies residues M1–A29. 4 disulfides stabilise this stretch: C32–C84, C44–C68, C54–C75, and C58–C77.

It belongs to the DEFL family.

Its subcellular location is the secreted. This chain is Defensin-like protein 11, found in Arabidopsis thaliana (Mouse-ear cress).